The primary structure comprises 293 residues: 4-hydroxy-tetrahydrodipicolinate synthase (293 aa).

Position 45 (Thr45) interacts with pyruvate. Tyr133 functions as the Proton donor/acceptor in the catalytic mechanism. Lys161 serves as the catalytic Schiff-base intermediate with substrate. Residue Ile203 participates in pyruvate binding.

It belongs to the DapA family. Homotetramer; dimer of dimers.

The protein resides in the cytoplasm. It carries out the reaction L-aspartate 4-semialdehyde + pyruvate = (2S,4S)-4-hydroxy-2,3,4,5-tetrahydrodipicolinate + H2O + H(+). The protein operates within amino-acid biosynthesis; L-lysine biosynthesis via DAP pathway; (S)-tetrahydrodipicolinate from L-aspartate: step 3/4. Its function is as follows. Catalyzes the condensation of (S)-aspartate-beta-semialdehyde [(S)-ASA] and pyruvate to 4-hydroxy-tetrahydrodipicolinate (HTPA). The sequence is that of 4-hydroxy-tetrahydrodipicolinate synthase from Shewanella piezotolerans (strain WP3 / JCM 13877).